A 110-amino-acid chain; its full sequence is Phosphoribosyl-AMP cyclohydrolase (110 aa).

Asp-80 contributes to the Mg(2+) binding site. A Zn(2+)-binding site is contributed by Cys-81. Mg(2+) contacts are provided by Asp-82 and Asp-84. The Zn(2+) site is built by Cys-97 and Cys-104.

It belongs to the PRA-CH family. In terms of assembly, homodimer. Mg(2+) is required as a cofactor. It depends on Zn(2+) as a cofactor.

It is found in the cytoplasm. The enzyme catalyses 1-(5-phospho-beta-D-ribosyl)-5'-AMP + H2O = 1-(5-phospho-beta-D-ribosyl)-5-[(5-phospho-beta-D-ribosylamino)methylideneamino]imidazole-4-carboxamide. It participates in amino-acid biosynthesis; L-histidine biosynthesis; L-histidine from 5-phospho-alpha-D-ribose 1-diphosphate: step 3/9. In terms of biological role, catalyzes the hydrolysis of the adenine ring of phosphoribosyl-AMP. The polypeptide is Phosphoribosyl-AMP cyclohydrolase (Clostridium botulinum (strain Kyoto / Type A2)).